We begin with the raw amino-acid sequence, 460 residues long: uncharacterized protein (460 aa).

Positions 1-33 (MKESNSRREFLSQSGKMVTAAALFGTSVPLAHA) form a signal peptide, tat-type signal.

The protein belongs to the metallo-dependent hydrolases superfamily. Exported by the Tat system. The position of the signal peptide cleavage has not been experimentally proven. Can also be exported by the Sec system.

This is an uncharacterized protein from Escherichia coli (strain K12).